The primary structure comprises 989 residues: Phosphoenolpyruvate carboxylase (989 aa).

Residues His-175 and Lys-630 contribute to the active site.

This sequence belongs to the PEPCase type 1 family. The cofactor is Mg(2+).

The enzyme catalyses oxaloacetate + phosphate = phosphoenolpyruvate + hydrogencarbonate. Forms oxaloacetate, a four-carbon dicarboxylic acid source for the tricarboxylic acid cycle. This is Phosphoenolpyruvate carboxylase from Prochlorococcus marinus subsp. pastoris (strain CCMP1986 / NIES-2087 / MED4).